A 122-amino-acid polypeptide reads, in one-letter code: Lycotoxin-Pa4a (122 aa).

Residues 1-20 (MKLGIFFSVFFLAMIHSCLS) form the signal peptide. The propeptide occupies 21–47 (ETNEDKNLESYFREDDLKALSFGEYAR). Disulfide bonds link Cys-58/Cys-73, Cys-65/Cys-82, Cys-72/Cys-100, and Cys-84/Cys-98.

It belongs to the neurotoxin 19 (CSTX) family. Expressed by the venom gland.

The protein localises to the secreted. It is found in the target cell membrane. Potent antibacterial peptide with anti-inflammatory properties. Inhibits both Gram-negative and Gram-positive bacteria by disrupting both the outer membrane and the cytosolic membrane of bacteria. Also downregulates the expression of pro-inflammatory mediators (cyclooxygenase-2 (PTGS2/COX2), nitric oxide-induced synthase (NOS2), IL-1 beta (IL1B), TNF-alpha (TNF)) and upregulates the level of anti-inflammatory cytokine (IL10) by inactivating mitogen-activated protein kinase signaling in a lipopolysaccharide-stimulated murine macrophage cell line. This chain is Lycotoxin-Pa4a, found in Pardosa astrigera (Wolf spider).